Here is a 364-residue protein sequence, read N- to C-terminus: Aminomethyltransferase (364 aa).

It belongs to the GcvT family. As to quaternary structure, the glycine cleavage system is composed of four proteins: P, T, L and H.

The catalysed reaction is N(6)-[(R)-S(8)-aminomethyldihydrolipoyl]-L-lysyl-[protein] + (6S)-5,6,7,8-tetrahydrofolate = N(6)-[(R)-dihydrolipoyl]-L-lysyl-[protein] + (6R)-5,10-methylene-5,6,7,8-tetrahydrofolate + NH4(+). In terms of biological role, the glycine cleavage system catalyzes the degradation of glycine. The protein is Aminomethyltransferase of Escherichia coli (strain 55989 / EAEC).